Consider the following 249-residue polypeptide: Aspartate/glutamate leucyltransferase (249 aa).

This sequence belongs to the R-transferase family. Bpt subfamily.

Its subcellular location is the cytoplasm. It catalyses the reaction N-terminal L-glutamyl-[protein] + L-leucyl-tRNA(Leu) = N-terminal L-leucyl-L-glutamyl-[protein] + tRNA(Leu) + H(+). It carries out the reaction N-terminal L-aspartyl-[protein] + L-leucyl-tRNA(Leu) = N-terminal L-leucyl-L-aspartyl-[protein] + tRNA(Leu) + H(+). Functions in the N-end rule pathway of protein degradation where it conjugates Leu from its aminoacyl-tRNA to the N-termini of proteins containing an N-terminal aspartate or glutamate. The chain is Aspartate/glutamate leucyltransferase from Brucella suis (strain ATCC 23445 / NCTC 10510).